The following is a 231-amino-acid chain: Probable methylthioribulose-1-phosphate dehydratase (231 aa).

Residue cysteine 82 coordinates substrate. Zn(2+) contacts are provided by histidine 100 and histidine 102. Catalysis depends on glutamate 123, which acts as the Proton donor/acceptor. Position 181 (histidine 181) interacts with Zn(2+).

Belongs to the aldolase class II family. MtnB subfamily. It depends on Zn(2+) as a cofactor.

It localises to the cytoplasm. It carries out the reaction 5-(methylsulfanyl)-D-ribulose 1-phosphate = 5-methylsulfanyl-2,3-dioxopentyl phosphate + H2O. It functions in the pathway amino-acid biosynthesis; L-methionine biosynthesis via salvage pathway; L-methionine from S-methyl-5-thio-alpha-D-ribose 1-phosphate: step 2/6. In terms of biological role, catalyzes the dehydration of methylthioribulose-1-phosphate (MTRu-1-P) into 2,3-diketo-5-methylthiopentyl-1-phosphate (DK-MTP-1-P). This chain is Probable methylthioribulose-1-phosphate dehydratase, found in Dictyostelium discoideum (Social amoeba).